The following is a 917-amino-acid chain: Probable dipeptidyl-aminopeptidase B (917 aa).

The interval 1–75 (MTVGRRLNDE…KYRDDVEEDW (75 aa)) is disordered. The Cytoplasmic portion of the chain corresponds to 1–93 (MTVGRRLNDE…NAKPSQRRTQ (93 aa)). Residues 27-39 (DSSSTASVSLTLV) are compositionally biased toward low complexity. Residues 40-49 (DGTNHTTAKP) are compositionally biased toward polar residues. Residues 57–69 (VSRDRYADEKYRD) are compositionally biased toward basic and acidic residues. A helical; Signal-anchor for type II membrane protein membrane pass occupies residues 94 to 114 (IVFWLLVALCVGGWAVAFLFF). Over 115–917 (VTSPGNTIST…KRVIRRLLHR (803 aa)) the chain is Vacuolar. The span at 124-133 (TTPDTGSGSP) shows a compositional bias: polar residues. Residues 124 to 150 (TTPDTGSGSPDSDVIKPGSPPAGKKIP) are disordered. N-linked (GlcNAc...) asparagine glycosylation is found at asparagine 206, asparagine 302, and asparagine 354. The active-site Charge relay system is serine 759. Asparagine 818 is a glycosylation site (N-linked (GlcNAc...) asparagine). Catalysis depends on charge relay system residues aspartate 836 and histidine 869.

This sequence belongs to the peptidase S9B family.

The protein resides in the vacuole membrane. It carries out the reaction Release of an N-terminal dipeptide, Xaa-Yaa-|-Zaa-, from a polypeptide, preferentially when Yaa is Pro, provided Zaa is neither Pro nor hydroxyproline.. Type IV dipeptidyl-peptidase which removes N-terminal dipeptides sequentially from polypeptides having unsubstituted N-termini provided that the penultimate residue is proline. In Arthroderma gypseum (strain ATCC MYA-4604 / CBS 118893) (Microsporum gypseum), this protein is Probable dipeptidyl-aminopeptidase B (DAPB).